We begin with the raw amino-acid sequence, 451 residues long: MIDSEALESERVKLKRDIADLRANLNRKEQCLRELEAAIAAGEDSDEAEESSNDMPTPQTKLTNDDIARYSRQLILQDFGVQGQLKLKNSSVLIVGMGGLGCPAAQYLVAAGCGHLGLIDYDEVERSNLHRQILHSEHRCGMSKAESARIALLELNSHCQIRCHSRLINSMNAMHIIRPYDVVLDCSDNVATRYLLNDACVMLRKPLVSGSALKMDGQLTVYGYGQGPCYRCIYPVPPPPEAVTNCGDGGVLGAVTGIIGAMQALEAIKVIIGLGDVMSGRLLIFDGSSFMFRNIRIRTKRPNCHVCSAQPLITELIDYEMFCGMHATDKDNPLDLLEPDQRLEVKEYHQKLQSQPHLLLDVRPPAEFEICQLPRSINVPLSEILDDSYLKRFAKQLEDKELPIVLLCRRGNDSQIAAQHIKNRFPAHSIRDLVGGLHAWTGSVDATFPIY.

Positions 42-62 are disordered; the sequence is GEDSDEAEESSNDMPTPQTKL. The segment covering 43 to 52 has biased composition (acidic residues); it reads EDSDEAEESS. Thr-60 is subject to Phosphothreonine. ATP contacts are provided by residues Gly-99, Asp-120, 127–131, Lys-144, and 188–189; these read SNLHR and DN. Residues Cys-229 and Cys-232 each contribute to the Zn(2+) site. Cys-246 functions as the Glycyl thioester intermediate; for adenylyltransferase activity in the catalytic mechanism. Residues Cys-304 and Cys-307 each contribute to the Zn(2+) site. The region spanning 353–449 is the Rhodanese domain; it reads QSQPHLLLDV…WTGSVDATFP (97 aa). Catalysis depends on Cys-408, which acts as the Cysteine persulfide intermediate; for sulfurtransferase activity.

The protein in the N-terminal section; belongs to the HesA/MoeB/ThiF family. UBA4 subfamily. Zn(2+) serves as cofactor.

It localises to the cytoplasm. Its subcellular location is the cytosol. The enzyme catalyses [molybdopterin-synthase sulfur-carrier protein]-C-terminal Gly-Gly + ATP + H(+) = [molybdopterin-synthase sulfur-carrier protein]-C-terminal Gly-Gly-AMP + diphosphate. It catalyses the reaction [molybdopterin-synthase sulfur-carrier protein]-C-terminal Gly-Gly-AMP + S-sulfanyl-L-cysteinyl-[cysteine desulfurase] + AH2 = [molybdopterin-synthase sulfur-carrier protein]-C-terminal-Gly-aminoethanethioate + L-cysteinyl-[cysteine desulfurase] + A + AMP + 2 H(+). Its pathway is tRNA modification; 5-methoxycarbonylmethyl-2-thiouridine-tRNA biosynthesis. The protein operates within cofactor biosynthesis; molybdopterin biosynthesis. In terms of biological role, plays a central role in 2-thiolation of mcm(5)S(2)U at tRNA wobble positions of cytosolic tRNA(Lys), tRNA(Glu) and tRNA(Gln). Also essential during biosynthesis of the molybdenum cofactor. Acts by mediating the C-terminal thiocarboxylation of sulfur carriers URM1 and MOCS2A. Its N-terminus first activates URM1 and MOCS2A as acyl-adenylates (-COAMP), then the persulfide sulfur on the catalytic cysteine is transferred to URM1 and MOCS2A to form thiocarboxylation (-COSH) of their C-terminus. The reaction probably involves hydrogen sulfide that is generated from the persulfide intermediate and that acts as a nucleophile towards URM1 and MOCS2A. Subsequently, a transient disulfide bond is formed. Does not use thiosulfate as sulfur donor; NFS1 probably acting as a sulfur donor for thiocarboxylation reactions. This is Adenylyltransferase and sulfurtransferase MOCS3 from Drosophila persimilis (Fruit fly).